Here is a 622-residue protein sequence, read N- to C-terminus: Low affinity potassium transport system protein Kup (622 aa).

Helical transmembrane passes span 9–29 (LSAV…TSPL), 46–66 (PDVV…VVSV), 101–121 (ILVV…VITP), 137–157 (PALD…LFVI), 165–185 (VGKL…LLGL), 213–233 (VSFF…ALYA), 247–267 (WFTV…ALLL), 276–296 (PFFL…ATLA), 337–357 (IYIP…IIGF), 363–383 (LAAA…ILFC), 395–415 (FLVV…FSAN), and 416–436 (VLKL…MFII).

The protein belongs to the HAK/KUP transporter (TC 2.A.72) family.

The protein resides in the cell inner membrane. It carries out the reaction K(+)(in) + H(+)(in) = K(+)(out) + H(+)(out). Responsible for the low-affinity transport of potassium into the cell. Likely operates as a K(+):H(+) symporter. This chain is Low affinity potassium transport system protein Kup, found in Yersinia pestis bv. Antiqua (strain Antiqua).